Reading from the N-terminus, the 219-residue chain is Small ribosomal subunit protein uS3 (219 aa).

The 69-residue stretch at 39 to 107 (LRKFLKKKLH…EVLIDIQEVR (69 aa)) folds into the KH type-2 domain.

It belongs to the universal ribosomal protein uS3 family. Part of the 30S ribosomal subunit. Forms a tight complex with proteins S10 and S14.

Its function is as follows. Binds the lower part of the 30S subunit head. Binds mRNA in the 70S ribosome, positioning it for translation. This is Small ribosomal subunit protein uS3 from Desulfatibacillum aliphaticivorans.